The following is a 344-amino-acid chain: Heat-inducible transcription repressor HrcA (344 aa).

Belongs to the HrcA family.

Its function is as follows. Negative regulator of class I heat shock genes (grpE-dnaK-dnaJ and groELS operons). Prevents heat-shock induction of these operons. This chain is Heat-inducible transcription repressor HrcA, found in Streptococcus mutans serotype c (strain ATCC 700610 / UA159).